Reading from the N-terminus, the 249-residue chain is Homeobox protein TGIF2LX (249 aa).

2 disordered regions span residues 1–62 and 126–192; these read MEAA…KRKG and DPIV…KLTV. The segment covering 9–27 has biased composition (basic and acidic residues); it reads AETRSRVEKDSRRAKKDSP. The span at 28–46 shows a compositional bias: polar residues; it reads AKTQSPAQDTSIMLRNNAD. Residues 55–118 constitute a DNA-binding region (homeobox; TALE-type); the sequence is EHKKKRKGYL…INARRRILPD (64 aa). Over residues 159–172 the composition is skewed to polar residues; the sequence is DNVQSLPLRSSPKG.

The protein belongs to the TALE/TGIF homeobox family.

Its subcellular location is the nucleus. In terms of biological role, may have a transcription role in testis. The polypeptide is Homeobox protein TGIF2LX (TGIF2LX) (Macaca fascicularis (Crab-eating macaque)).